A 608-amino-acid polypeptide reads, in one-letter code: Alpha-1,3-galactosidase A (608 aa).

The N-terminal stretch at 1–21 (MQRRTFIKSISAMMATSTTLG) is a signal peptide. Residue Cys22 is the site of N-palmitoyl cysteine attachment. A lipid anchor (S-diacylglycerol cysteine) is attached at Cys22. PbH1 repeat units follow at residues 262-292 (TKNT…KLDN), 318-340 (KGHV…NVHG), 426-448 (PDHV…LLTV), 449-470 (SGKI…KIGS), and 481-507 (VESV…DIVP).

Belongs to the glycosyl hydrolase 110 family. A subfamily.

The protein resides in the cell membrane. It catalyses the reaction Hydrolysis of terminal, non-reducing branched (1-&gt;3)-alpha-D-galactosidic residues, producing free D-galactose.. The catalysed reaction is Hydrolysis of terminal, non-reducing alpha-D-galactose residues in alpha-D-galactosides, including galactose oligosaccharides, galactomannans and galactolipids.. Alpha-galactosidase that specifically removes branched alpha-1,3-linked galactose residues present in blood group B antigens. Has no activity toward linear alpha-1,3-linked galactose residues. The chain is Alpha-1,3-galactosidase A (glaA) from Shewanella woodyi (strain ATCC 51908 / MS32).